Reading from the N-terminus, the 258-residue chain is Acyl-[acyl-carrier-protein]--UDP-N-acetylglucosamine O-acyltransferase (258 aa).

It belongs to the transferase hexapeptide repeat family. LpxA subfamily. In terms of assembly, homotrimer.

The protein localises to the cytoplasm. It carries out the reaction a (3R)-hydroxyacyl-[ACP] + UDP-N-acetyl-alpha-D-glucosamine = a UDP-3-O-[(3R)-3-hydroxyacyl]-N-acetyl-alpha-D-glucosamine + holo-[ACP]. It functions in the pathway glycolipid biosynthesis; lipid IV(A) biosynthesis; lipid IV(A) from (3R)-3-hydroxytetradecanoyl-[acyl-carrier-protein] and UDP-N-acetyl-alpha-D-glucosamine: step 1/6. In terms of biological role, involved in the biosynthesis of lipid A, a phosphorylated glycolipid that anchors the lipopolysaccharide to the outer membrane of the cell. The sequence is that of Acyl-[acyl-carrier-protein]--UDP-N-acetylglucosamine O-acyltransferase from Pseudomonas fluorescens (strain SBW25).